The primary structure comprises 396 residues: Putative carbamoyltransferase YgeW (396 aa).

Residues 71–74 (STRT), glutamine 98, 165–168 (HPTQ), and 330–331 (CL) contribute to the carbamoyl phosphate site.

It belongs to the aspartate/ornithine carbamoyltransferase superfamily. In terms of assembly, homotrimer.

The protein is Putative carbamoyltransferase YgeW (ygeW) of Escherichia coli O157:H7.